Reading from the N-terminus, the 245-residue chain is 2,3-bisphosphoglycerate-dependent phosphoglycerate mutase (245 aa).

Residues 8-15 (RHGQSLWN), 21-22 (TG), Arg-60, 87-90 (ERHY), Lys-98, 114-115 (RR), and 183-184 (GN) each bind substrate. The Tele-phosphohistidine intermediate role is filled by His-9. Residue Glu-87 is the Proton donor/acceptor of the active site.

This sequence belongs to the phosphoglycerate mutase family. BPG-dependent PGAM subfamily.

The catalysed reaction is (2R)-2-phosphoglycerate = (2R)-3-phosphoglycerate. The protein operates within carbohydrate degradation; glycolysis; pyruvate from D-glyceraldehyde 3-phosphate: step 3/5. Catalyzes the interconversion of 2-phosphoglycerate and 3-phosphoglycerate. This is 2,3-bisphosphoglycerate-dependent phosphoglycerate mutase from Bacillus cereus (strain ZK / E33L).